Reading from the N-terminus, the 197-residue chain is Imidazoleglycerol-phosphate dehydratase (197 aa).

Belongs to the imidazoleglycerol-phosphate dehydratase family.

The protein localises to the cytoplasm. The catalysed reaction is D-erythro-1-(imidazol-4-yl)glycerol 3-phosphate = 3-(imidazol-4-yl)-2-oxopropyl phosphate + H2O. The protein operates within amino-acid biosynthesis; L-histidine biosynthesis; L-histidine from 5-phospho-alpha-D-ribose 1-diphosphate: step 6/9. This chain is Imidazoleglycerol-phosphate dehydratase, found in Saccharophagus degradans (strain 2-40 / ATCC 43961 / DSM 17024).